The primary structure comprises 273 residues: Glutamate 5-kinase (273 aa).

Lys15 provides a ligand contact to ATP. Substrate is bound by residues Ser55, Asp142, and Asn158. ATP is bound by residues Ser178–Asp179 and Thr220–Lys226.

The protein belongs to the glutamate 5-kinase family.

The protein localises to the cytoplasm. The enzyme catalyses L-glutamate + ATP = L-glutamyl 5-phosphate + ADP. It functions in the pathway amino-acid biosynthesis; L-proline biosynthesis; L-glutamate 5-semialdehyde from L-glutamate: step 1/2. Its function is as follows. Catalyzes the transfer of a phosphate group to glutamate to form L-glutamate 5-phosphate. This is Glutamate 5-kinase from Streptococcus pyogenes serotype M3 (strain ATCC BAA-595 / MGAS315).